Reading from the N-terminus, the 66-residue chain is Large ribosomal subunit protein bL35 (66 aa).

Over residues 1–24 (MPKQKTHRGAAKRFKKTGSGKLKR) the composition is skewed to basic residues. Residues 1–26 (MPKQKTHRGAAKRFKKTGSGKLKRDH) are disordered.

This sequence belongs to the bacterial ribosomal protein bL35 family.

In Bacillus cytotoxicus (strain DSM 22905 / CIP 110041 / 391-98 / NVH 391-98), this protein is Large ribosomal subunit protein bL35.